A 202-amino-acid chain; its full sequence is Superoxide dismutase [Mn], mitochondrial (202 aa).

The N-terminal 5 residues, histidine 1–methionine 5, are a transit peptide targeting the mitochondrion. Histidine 31 serves as a coordination point for Mn(2+). Tyrosine 39 is modified (3'-nitrotyrosine). Position 49 is an N6-acetyllysine; alternate (lysine 49). Lysine 49 is subject to N6-succinyllysine; alternate. Position 79 (histidine 79) interacts with Mn(2+). The residue at position 95 (lysine 95) is an N6-acetyllysine. Lysine 103 and lysine 111 each carry N6-acetyllysine; alternate. Lysine 103 and lysine 111 each carry N6-succinyllysine; alternate. Mn(2+) contacts are provided by aspartate 164 and histidine 168. At lysine 183 the chain carries N6-acetyllysine.

The protein belongs to the iron/manganese superoxide dismutase family. Homotetramer. Mn(2+) serves as cofactor. Nitrated under oxidative stress. Nitration coupled with oxidation inhibits the catalytic activity. In terms of processing, acetylation at Lys-122 decreases enzymatic activity. Deacetylated by SIRT3 upon exposure to ionizing radiations or after long fasting. Post-translationally, polyubiquitinated; leading to proteasomal degradation. Deubiquitinated by USP36 which increases protein stability.

The protein resides in the mitochondrion matrix. The enzyme catalyses 2 superoxide + 2 H(+) = H2O2 + O2. Its function is as follows. Destroys superoxide anion radicals which are normally produced within the cells and which are toxic to biological systems. This chain is Superoxide dismutase [Mn], mitochondrial (SOD2), found in Oryctolagus cuniculus (Rabbit).